The following is a 347-amino-acid chain: Holliday junction branch migration complex subunit RuvB (347 aa).

The interval 1–185 (MSDDPTTPEL…FGFTAHLEFY (185 aa)) is large ATPase domain (RuvB-L). ATP is bound by residues Leu-24, Arg-25, Gly-66, Lys-69, Thr-70, Thr-71, 132 to 134 (EDF), Arg-175, Tyr-185, and Arg-222. A Mg(2+)-binding site is contributed by Thr-70. A small ATPAse domain (RuvB-S) region spans residues 186 to 255 (DEGELAQVLA…AVHAALELYD (70 aa)). The tract at residues 258–347 (ELGLDRLDRA…SQPPSLMDDL (90 aa)) is head domain (RuvB-H). Arg-313 and Arg-318 together coordinate DNA.

Belongs to the RuvB family. As to quaternary structure, homohexamer. Forms an RuvA(8)-RuvB(12)-Holliday junction (HJ) complex. HJ DNA is sandwiched between 2 RuvA tetramers; dsDNA enters through RuvA and exits via RuvB. An RuvB hexamer assembles on each DNA strand where it exits the tetramer. Each RuvB hexamer is contacted by two RuvA subunits (via domain III) on 2 adjacent RuvB subunits; this complex drives branch migration. In the full resolvosome a probable DNA-RuvA(4)-RuvB(12)-RuvC(2) complex forms which resolves the HJ.

It localises to the cytoplasm. It carries out the reaction ATP + H2O = ADP + phosphate + H(+). Its function is as follows. The RuvA-RuvB-RuvC complex processes Holliday junction (HJ) DNA during genetic recombination and DNA repair, while the RuvA-RuvB complex plays an important role in the rescue of blocked DNA replication forks via replication fork reversal (RFR). RuvA specifically binds to HJ cruciform DNA, conferring on it an open structure. The RuvB hexamer acts as an ATP-dependent pump, pulling dsDNA into and through the RuvAB complex. RuvB forms 2 homohexamers on either side of HJ DNA bound by 1 or 2 RuvA tetramers; 4 subunits per hexamer contact DNA at a time. Coordinated motions by a converter formed by DNA-disengaged RuvB subunits stimulates ATP hydrolysis and nucleotide exchange. Immobilization of the converter enables RuvB to convert the ATP-contained energy into a lever motion, pulling 2 nucleotides of DNA out of the RuvA tetramer per ATP hydrolyzed, thus driving DNA branch migration. The RuvB motors rotate together with the DNA substrate, which together with the progressing nucleotide cycle form the mechanistic basis for DNA recombination by continuous HJ branch migration. Branch migration allows RuvC to scan DNA until it finds its consensus sequence, where it cleaves and resolves cruciform DNA. The chain is Holliday junction branch migration complex subunit RuvB from Leifsonia xyli subsp. xyli (strain CTCB07).